A 430-amino-acid polypeptide reads, in one-letter code: Serine--tRNA ligase (430 aa).

237-239 (TAE) is an L-serine binding site. 268–270 (RSE) serves as a coordination point for ATP. L-serine is bound at residue glutamate 291. 355 to 358 (EISS) contacts ATP. Serine 391 contributes to the L-serine binding site.

The protein belongs to the class-II aminoacyl-tRNA synthetase family. Type-1 seryl-tRNA synthetase subfamily. Homodimer. The tRNA molecule binds across the dimer.

The protein resides in the cytoplasm. The catalysed reaction is tRNA(Ser) + L-serine + ATP = L-seryl-tRNA(Ser) + AMP + diphosphate + H(+). It carries out the reaction tRNA(Sec) + L-serine + ATP = L-seryl-tRNA(Sec) + AMP + diphosphate + H(+). It functions in the pathway aminoacyl-tRNA biosynthesis; selenocysteinyl-tRNA(Sec) biosynthesis; L-seryl-tRNA(Sec) from L-serine and tRNA(Sec): step 1/1. Its function is as follows. Catalyzes the attachment of serine to tRNA(Ser). Is also able to aminoacylate tRNA(Sec) with serine, to form the misacylated tRNA L-seryl-tRNA(Sec), which will be further converted into selenocysteinyl-tRNA(Sec). This is Serine--tRNA ligase from Klebsiella pneumoniae subsp. pneumoniae (strain ATCC 700721 / MGH 78578).